Reading from the N-terminus, the 279-residue chain is Diaminopimelate epimerase (279 aa).

Residues N13 and N66 each contribute to the substrate site. The active-site Proton donor is C75. Substrate contacts are provided by residues 76–77 (GN), N162, N195, and 213–214 (ER). The active-site Proton acceptor is the C222. 223–224 (GT) contributes to the substrate binding site.

The protein belongs to the diaminopimelate epimerase family. As to quaternary structure, homodimer.

The protein resides in the cytoplasm. It carries out the reaction (2S,6S)-2,6-diaminopimelate = meso-2,6-diaminopimelate. It functions in the pathway amino-acid biosynthesis; L-lysine biosynthesis via DAP pathway; DL-2,6-diaminopimelate from LL-2,6-diaminopimelate: step 1/1. In terms of biological role, catalyzes the stereoinversion of LL-2,6-diaminopimelate (L,L-DAP) to meso-diaminopimelate (meso-DAP), a precursor of L-lysine and an essential component of the bacterial peptidoglycan. In Synechocystis sp. (strain ATCC 27184 / PCC 6803 / Kazusa), this protein is Diaminopimelate epimerase.